Here is a 375-residue protein sequence, read N- to C-terminus: CLIP domain-containing serine protease B14 (375 aa).

A signal peptide spans 1 to 24 (MYSRRYVACGLLCLLVIAIDQGHG). Residues 29–83 (PCTTPNGTAGRCVRVRECGYVLDLLRKDLFAHSDTVHLEGLQCGTRPDGGALVCC) form the Clip domain. 3 cysteine pairs are disulfide-bonded: Cys-30-Cys-82, Cys-40-Cys-71, and Cys-46-Cys-83. Residue Asn-34 is glycosylated (N-linked (GlcNAc...) asparagine). Residues 101 to 370 (IIGGNDTELG…YMGWLEREMF (270 aa)) enclose the Peptidase S1 domain. Asn-105 is a glycosylation site (N-linked (GlcNAc...) asparagine). The cysteines at positions 131 and 147 are disulfide-linked. Catalysis depends on charge relay system residues His-146 and Asp-213. Asn-238 carries an N-linked (GlcNAc...) asparagine glycan. 2 disulfides stabilise this stretch: Cys-289/Cys-307 and Cys-317/Cys-346. Ser-321 acts as the Charge relay system in catalysis. N-linked (GlcNAc...) asparagine glycosylation occurs at Asn-357.

This sequence belongs to the peptidase S1 family. CLIP subfamily. N-glycosylated. Post-translationally, proteolytically cleaved. Expressed by a subpopulation of hemocytes.

It localises to the secreted. Functionally, serine protease. Plays a role in innate immunity against infections by parasite P.berghei and by Gram-negative bacteria such as E.coli. In response to P.berghei infection, contributes to the clearing of parasite ookinetes independent of melanization, an innate immune response which consists in the deposition of melanin pigments on invading pathogens and parasites. May play a role in non-septic wound healing. The protein is CLIP domain-containing serine protease B14 of Anopheles gambiae (African malaria mosquito).